We begin with the raw amino-acid sequence, 263 residues long: Proteasome subunit beta type-4 (263 aa).

At M1 the chain carries N-acetylmethionine. Positions 1–44 are excised as a propeptide; sequence MEAFWESRTGHWAGGPAPGQFYRVPSTPSCLMDPMSAPARPITR. Phosphoserine is present on S26. Y101 carries the phosphotyrosine modification.

This sequence belongs to the peptidase T1B family. In terms of assembly, the 26S proteasome consists of a 20S proteasome core and two 19S regulatory subunits. The 20S proteasome core is a barrel-shaped complex made of 28 subunits that are arranged in four stacked rings. The two outer rings are each formed by seven alpha subunits, and the two inner rings are formed by seven beta subunits. The proteolytic activity is exerted by three beta-subunits PSMB5, PSMB6 and PSMB7. Forms a ternary complex with SMAD1 and OAZ1 before PSMB4 is incorporated into the 20S proteasome. Interacts with PRPF19.

It is found in the cytoplasm. Its subcellular location is the nucleus. In terms of biological role, non-catalytic component of the 20S core proteasome complex involved in the proteolytic degradation of most intracellular proteins. This complex plays numerous essential roles within the cell by associating with different regulatory particles. Associated with two 19S regulatory particles, forms the 26S proteasome and thus participates in the ATP-dependent degradation of ubiquitinated proteins. The 26S proteasome plays a key role in the maintenance of protein homeostasis by removing misfolded or damaged proteins that could impair cellular functions, and by removing proteins whose functions are no longer required. Associated with the PA200 or PA28, the 20S proteasome mediates ubiquitin-independent protein degradation. This type of proteolysis is required in several pathways including spermatogenesis (20S-PA200 complex) or generation of a subset of MHC class I-presented antigenic peptides (20S-PA28 complex). SMAD1/OAZ1/PSMB4 complex mediates the degradation of the CREBBP/EP300 repressor SNIP1. This chain is Proteasome subunit beta type-4 (Psmb4), found in Rattus norvegicus (Rat).